The following is a 118-amino-acid chain: Large ribosomal subunit protein uL18 (118 aa).

The disordered stretch occupies residues 1 to 25 (MISKPDKNKIRQKRHRRVRGKLSGT). Basic residues predominate over residues 10–20 (IRQKRHRRVRG).

Belongs to the universal ribosomal protein uL18 family. Part of the 50S ribosomal subunit; part of the 5S rRNA/L5/L18/L25 subcomplex. Contacts the 5S and 23S rRNAs.

Its function is as follows. This is one of the proteins that bind and probably mediate the attachment of the 5S RNA into the large ribosomal subunit, where it forms part of the central protuberance. This Streptococcus pyogenes serotype M5 (strain Manfredo) protein is Large ribosomal subunit protein uL18.